Here is a 151-residue protein sequence, read N- to C-terminus: Small ribosomal subunit protein uS15 (151 aa).

It belongs to the universal ribosomal protein uS15 family.

The sequence is that of Small ribosomal subunit protein uS15 (RpS13) from Choristoneura parallela (Spotted fireworm moth).